Here is a 417-residue protein sequence, read N- to C-terminus: Phosphoglycerate kinase (417 aa).

(2R)-3-phosphoglycerate-binding residues include Val-23, Asp-24, Phe-25, Asn-26, Gln-39, Arg-40, Ser-63, His-64, Gly-66, Arg-67, Leu-122, Arg-123, His-170, and Arg-171. Gly-214 provides a ligand contact to ADP. A CDP-binding site is contributed by Gly-214. Ala-215 and Lys-216 together coordinate AMP. An ATP-binding site is contributed by Ala-215. Position 215 (Ala-215) interacts with Mg(2+). CDP is bound at residue Asp-219. Asp-219 serves as a coordination point for Mg(2+). Lys-220 contributes to the AMP binding site. Lys-220 is a binding site for ATP. Gly-238 is a binding site for ADP. Gly-238 contributes to the CDP binding site. The AMP site is built by Gly-239 and Gly-313. Residues Gly-239 and Gly-313 each coordinate ATP. The CDP site is built by Gly-338, Ala-340, and Phe-343. Residue Phe-343 participates in ADP binding. An AMP-binding site is contributed by Glu-344. Glu-344, Asp-375, and Thr-376 together coordinate ATP. Asp-375 is a Mg(2+) binding site.

This sequence belongs to the phosphoglycerate kinase family. In terms of assembly, monomer. It depends on Mg(2+) as a cofactor.

Its subcellular location is the cytoplasm. The protein resides in the mitochondrion. The catalysed reaction is (2R)-3-phosphoglycerate + ATP = (2R)-3-phospho-glyceroyl phosphate + ADP. It participates in carbohydrate degradation; glycolysis; pyruvate from D-glyceraldehyde 3-phosphate: step 2/5. Catalyzes one of the two ATP producing reactions in the glycolytic pathway via the reversible conversion of 1,3-diphosphoglycerate to 3-phosphoglycerate. Both L- and D- forms of purine and pyrimidine nucleotides can be used as substrates, but the activity is much lower on pyrimidines. Negatively regulates the biosynthesis of acetyl-CoA from pyruvate in the mitochondrion. This is Phosphoglycerate kinase (pgk1) from Hypocrea rufa (Trichoderma viride).